We begin with the raw amino-acid sequence, 94 residues long: Large ribosomal subunit protein uL24c (94 aa).

Belongs to the universal ribosomal protein uL24 family. Part of the 50S ribosomal subunit.

The protein resides in the plastid. It is found in the chloroplast. Functionally, one of two assembly initiator proteins, it binds directly to the 5'-end of the 23S rRNA, where it nucleates assembly of the 50S subunit. The sequence is that of Large ribosomal subunit protein uL24c (rpl24) from Cyanidium caldarium (Red alga).